Consider the following 102-residue polypeptide: NADH-quinone oxidoreductase subunit K (102 aa).

3 consecutive transmembrane segments (helical) span residues 5–25 (LSHF…GIIL), 30–50 (IIVV…NLVS), and 62–82 (VFSL…LAIL).

This sequence belongs to the complex I subunit 4L family. As to quaternary structure, NDH-1 is composed of 14 different subunits. Subunits NuoA, H, J, K, L, M, N constitute the membrane sector of the complex.

It localises to the cell inner membrane. It carries out the reaction a quinone + NADH + 5 H(+)(in) = a quinol + NAD(+) + 4 H(+)(out). Functionally, NDH-1 shuttles electrons from NADH, via FMN and iron-sulfur (Fe-S) centers, to quinones in the respiratory chain. The immediate electron acceptor for the enzyme in this species is believed to be ubiquinone. Couples the redox reaction to proton translocation (for every two electrons transferred, four hydrogen ions are translocated across the cytoplasmic membrane), and thus conserves the redox energy in a proton gradient. The chain is NADH-quinone oxidoreductase subunit K from Methylocella silvestris (strain DSM 15510 / CIP 108128 / LMG 27833 / NCIMB 13906 / BL2).